A 102-amino-acid chain; its full sequence is Carboxysome shell protein CcmK2 (102 aa).

The region spanning 4-90 is the BMC domain; it reads AVGMIETRGF…PHENLEYVLP (87 aa).

The protein belongs to the bacterial microcompartments protein family. CcmK subfamily. As to quaternary structure, homohexamer. Stacked hexamers, with the concave faces together, have also been crystallized. Interacts preferentially with itself, then with CcmK1 and CcmK4a in vitro. May interact with CcmL, this occurs at very high CcmK2 concentrations. Interacts with CcmN and CcmO in the carboxysome.

It localises to the carboxysome. In terms of biological role, probably the major shell protein of the carboxysome, a polyhedral inclusion where RuBisCO (ribulose bisphosphate carboxylase, rbcL-rbcS) is sequestered. Assembles into hexamers which make sheets that form the facets of the polyhedral carboxysome. The hexamer central pore probably regulates metabolite flux. This chain is Carboxysome shell protein CcmK2, found in Thermosynechococcus vestitus (strain NIES-2133 / IAM M-273 / BP-1).